A 354-amino-acid chain; its full sequence is uncharacterized protein (354 aa).

Residues 43-63 (LIAVTLWSCVGSLLFICLLAV) traverse the membrane as a helical segment.

The protein resides in the cell membrane. This is an uncharacterized protein from Bacillus subtilis (strain 168).